The primary structure comprises 269 residues: Hemin import ATP-binding protein HmuV (269 aa).

Residues 5-242 (IETHSVTMRI…GLIRKVFEVC (238 aa)) form the ABC transporter domain. 37–44 (GPNGAGKS) provides a ligand contact to ATP.

The protein belongs to the ABC transporter superfamily. Heme (hemin) importer (TC 3.A.1.14.5) family. The complex is composed of two ATP-binding proteins (HmuV), two transmembrane proteins (HmuU) and a solute-binding protein (HmuT).

Its subcellular location is the cell inner membrane. Its function is as follows. Part of the ABC transporter complex HmuTUV involved in hemin import. Responsible for energy coupling to the transport system. The sequence is that of Hemin import ATP-binding protein HmuV from Nitrobacter winogradskyi (strain ATCC 25391 / DSM 10237 / CIP 104748 / NCIMB 11846 / Nb-255).